The chain runs to 186 residues: Adenylate kinase (186 aa).

11 to 16 serves as a coordination point for ATP; that stretch reads GAGKGT. Positions 31-60 are NMP; it reads STGDILRAAVKNGTAMGIEAKKYMDAGDLV. Residues Thr32, Arg37, 58 to 60, 86 to 89, and Gln93 each bind AMP; these read DLV and GFPR. Residues 127–137 are LID; it reads GRAIKEGRSDD. ATP is bound at residue Arg128. Residues Arg134 and Arg145 each coordinate AMP. An ATP-binding site is contributed by Gly173.

This sequence belongs to the adenylate kinase family. Monomer.

The protein resides in the cytoplasm. It carries out the reaction AMP + ATP = 2 ADP. Its pathway is purine metabolism; AMP biosynthesis via salvage pathway; AMP from ADP: step 1/1. Catalyzes the reversible transfer of the terminal phosphate group between ATP and AMP. Plays an important role in cellular energy homeostasis and in adenine nucleotide metabolism. The protein is Adenylate kinase of Leptospira biflexa serovar Patoc (strain Patoc 1 / Ames).